The chain runs to 510 residues: Inositol-3-phosphate synthase isozyme 2 (510 aa).

Belongs to the myo-inositol 1-phosphate synthase family. NAD(+) is required as a cofactor. In terms of tissue distribution, expressed in siliques, leaves, roots, seed endosperm, but not in embryos. Highest expression in seeds. In leaves, only expressed in hydathodes and vascular tissue.

The protein resides in the cytoplasm. The catalysed reaction is D-glucose 6-phosphate = 1D-myo-inositol 3-phosphate. The protein operates within polyol metabolism; myo-inositol biosynthesis; myo-inositol from D-glucose 6-phosphate: step 1/2. Functionally, key enzyme in myo-inositol biosynthesis pathway that catalyzes the conversion of glucose 6-phosphate to 1-myo-inositol 1-phosphate in a NAD-dependent manner. The protein is Inositol-3-phosphate synthase isozyme 2 (IPS2) of Arabidopsis thaliana (Mouse-ear cress).